A 183-amino-acid polypeptide reads, in one-letter code: SAYSvFN domain-containing protein 1 (183 aa).

Over 1–105 (MEQRLAEFRA…SFLTNITFLK (105 aa)) the chain is Cytoplasmic. The interval 11-36 (ARKRAGLAAQPPAASQGAQTPGEKAE) is disordered. Residues 16-36 (GLAAQPPAASQGAQTPGEKAE) show a composition bias toward low complexity. Positions 91-105 (SCWDQSFLTNITFLK) are middle helical (MH). Residues 106–126 (VLLWLVLLGLFVELEFGLAYF) constitute an intramembrane region (helical). The Cytoplasmic segment spans residues 127 to 183 (VLSLFYWMYVGTRGPEEKKEGEKSAYSVFNPGCEAIQGTLTAEQLERELQLRPLAGR).

The protein belongs to the SAYSD1 family. Associates (via N-terminus) with ribosomes.

It is found in the endoplasmic reticulum membrane. Its subcellular location is the cytoplasmic vesicle membrane. Ufmylation 'reader' component of a translocation-associated quality control pathway, a mechanism that takes place when a ribosome has stalled during translation, and which is required to degrade clogged substrates. Specifically recognizes and binds ufmylated ribosomes when a ribosome has stalled, promoting the transport of stalled nascent chain via the TRAPP complex to lysosomes for degradation. The protein is SAYSvFN domain-containing protein 1 of Homo sapiens (Human).